Reading from the N-terminus, the 341-residue chain is APSMTTPEPASKRRVVLGEISNNSSAVSGNEDLLCREFEVPKCVAQKKRKRGVKEDVGVDFGEKFDDPQMCSAYVSDVYEYLKQMEMETKRRPMMNYIEQVQKDVTSNMRGVLVDWLVEVSLEYKLLPETLYLAISYVDRYLSVNVLNRQKLQLLGVSSFLIASKYEEIKPKNVADFVDITDNTYSQQEVVKMEADLLKTLKFEMGSPTVKTFLGFIRAVQENPDVPKLKFEFLANYLAELSLLDYGCLEFVPSLIAASVTFLARFTIRPNVNPWSIALQKCSGYKSKDLKECVLLLHDLQMGRRGGSLSAVRDKYKKHKFKCVSTLSPAPEIPESIFNDV.

The protein belongs to the cyclin family. Cyclin AB subfamily.

Essential for the control of the cell cycle at the G2/M (mitosis) transition. Interacts with the CDC2 and CDK2 protein kinases to form MPF. G2/M cyclins accumulate steadily during G2 and are abruptly destroyed at mitosis. In Daucus carota (Wild carrot), this protein is G2/mitotic-specific cyclin C13-1.